Reading from the N-terminus, the 357-residue chain is Alternative oxidase, mitochondrial (357 aa).

The helical transmembrane segment at 152-172 threads the bilayer; it reads LTRCIFLESIAGVPGAVASFI. Fe cation is bound by residues glutamate 159, glutamate 198, and histidine 201. A helical membrane pass occupies residues 218–238; that stretch reads IIYVGQGVFCNLFFLFYLANP. Fe cation-binding residues include glutamate 249, glutamate 304, and histidine 307. A disordered region spans residues 330 to 357; the sequence is IPDLKEPQPESGLKVTKPHGWEKEELKL. A compositionally biased stretch (basic and acidic residues) spans 348–357; that stretch reads HGWEKEELKL.

The protein belongs to the alternative oxidase family. It depends on Fe cation as a cofactor.

It is found in the mitochondrion inner membrane. Functionally, catalyzes cyanide-resistant oxygen consumption. May increase respiration when the cytochrome respiratory pathway is restricted, or in response to low temperatures. In Scheffersomyces stipitis (strain ATCC 58785 / CBS 6054 / NBRC 10063 / NRRL Y-11545) (Yeast), this protein is Alternative oxidase, mitochondrial (STO1).